Here is a 306-residue protein sequence, read N- to C-terminus: Beta-lactamase (306 aa).

The first 36 residues, 1–36, serve as a signal peptide directing secretion; it reads MKLKTKASIKFGICVGLLCLSITGFTPFFNSTHAEA. The Acyl-ester intermediate role is filled by Ser89. Substrate is bound at residue 251–253; it reads KSG.

It belongs to the class-A beta-lactamase family.

The protein resides in the secreted. It catalyses the reaction a beta-lactam + H2O = a substituted beta-amino acid. Its function is as follows. This protein is a beta-lactamase with a substrate specificity for penicillins. The polypeptide is Beta-lactamase (penP) (Bacillus subtilis (strain 168)).